A 223-amino-acid polypeptide reads, in one-letter code: 7-cyano-7-deazaguanine synthase (223 aa).

8-18 (LSGGLDSATTL) provides a ligand contact to ATP. Residues cysteine 187, cysteine 197, cysteine 200, and cysteine 203 each coordinate Zn(2+).

The protein belongs to the QueC family. It depends on Zn(2+) as a cofactor.

It carries out the reaction 7-carboxy-7-deazaguanine + NH4(+) + ATP = 7-cyano-7-deazaguanine + ADP + phosphate + H2O + H(+). Its pathway is purine metabolism; 7-cyano-7-deazaguanine biosynthesis. In terms of biological role, catalyzes the ATP-dependent conversion of 7-carboxy-7-deazaguanine (CDG) to 7-cyano-7-deazaguanine (preQ(0)). The protein is 7-cyano-7-deazaguanine synthase of Methylococcus capsulatus (strain ATCC 33009 / NCIMB 11132 / Bath).